Here is a 203-residue protein sequence, read N- to C-terminus: Cardiotrophin-1 (203 aa).

Belongs to the IL-6 superfamily. Highly expressed in heart, skeletal muscle, liver, lung and kidney. Lower levels in testis and brain. No expression in spleen.

It localises to the secreted. Its function is as follows. Induces cardiac myocyte hypertrophy in vitro. Binds to and activates the ILST/gp130 receptor. The chain is Cardiotrophin-1 (Ctf1) from Mus musculus (Mouse).